We begin with the raw amino-acid sequence, 217 residues long: Probable transaldolase (217 aa).

Lys83 serves as the catalytic Schiff-base intermediate with substrate.

The protein belongs to the transaldolase family. Type 3B subfamily.

It localises to the cytoplasm. It carries out the reaction D-sedoheptulose 7-phosphate + D-glyceraldehyde 3-phosphate = D-erythrose 4-phosphate + beta-D-fructose 6-phosphate. The protein operates within carbohydrate degradation; pentose phosphate pathway; D-glyceraldehyde 3-phosphate and beta-D-fructose 6-phosphate from D-ribose 5-phosphate and D-xylulose 5-phosphate (non-oxidative stage): step 2/3. Transaldolase is important for the balance of metabolites in the pentose-phosphate pathway. The protein is Probable transaldolase of Brucella anthropi (strain ATCC 49188 / DSM 6882 / CCUG 24695 / JCM 21032 / LMG 3331 / NBRC 15819 / NCTC 12168 / Alc 37) (Ochrobactrum anthropi).